The sequence spans 284 residues: 4-diphosphocytidyl-2-C-methyl-D-erythritol kinase (284 aa).

Lysine 14 is an active-site residue. 97–107 (PMGGGLGGGSS) serves as a coordination point for ATP. Aspartate 139 is a catalytic residue.

The protein belongs to the GHMP kinase family. IspE subfamily.

It catalyses the reaction 4-CDP-2-C-methyl-D-erythritol + ATP = 4-CDP-2-C-methyl-D-erythritol 2-phosphate + ADP + H(+). The protein operates within isoprenoid biosynthesis; isopentenyl diphosphate biosynthesis via DXP pathway; isopentenyl diphosphate from 1-deoxy-D-xylulose 5-phosphate: step 3/6. Its function is as follows. Catalyzes the phosphorylation of the position 2 hydroxy group of 4-diphosphocytidyl-2C-methyl-D-erythritol. The sequence is that of 4-diphosphocytidyl-2-C-methyl-D-erythritol kinase from Psychromonas ingrahamii (strain DSM 17664 / CCUG 51855 / 37).